We begin with the raw amino-acid sequence, 275 residues long: Translation initiation factor 2 subunit alpha (275 aa).

One can recognise an S1 motif domain in the interval Gly12–Arg83.

This sequence belongs to the eIF-2-alpha family. As to quaternary structure, heterotrimer composed of an alpha, a beta and a gamma chain.

In terms of biological role, eIF-2 functions in the early steps of protein synthesis by forming a ternary complex with GTP and initiator tRNA. The protein is Translation initiation factor 2 subunit alpha (eif2a) of Pyrococcus abyssi (strain GE5 / Orsay).